The sequence spans 190 residues: RNA pyrophosphohydrolase (190 aa).

Residues Gly-6–Asn-149 form the Nudix hydrolase domain. A Nudix box motif is present at residues Gly-38 to Gly-59. Positions Gln-167 to Gly-190 are disordered.

Belongs to the Nudix hydrolase family. RppH subfamily. Requires a divalent metal cation as cofactor.

Functionally, accelerates the degradation of transcripts by removing pyrophosphate from the 5'-end of triphosphorylated RNA, leading to a more labile monophosphorylated state that can stimulate subsequent ribonuclease cleavage. In Bordetella parapertussis (strain 12822 / ATCC BAA-587 / NCTC 13253), this protein is RNA pyrophosphohydrolase.